The following is a 567-amino-acid chain: Malate synthase, glyoxysomal (567 aa).

The active-site Proton acceptor is the R182. D468 serves as the catalytic Proton donor. A Microbody targeting signal motif is present at residues 565 to 567 (SKL).

This sequence belongs to the malate synthase family.

Its subcellular location is the glyoxysome. It carries out the reaction glyoxylate + acetyl-CoA + H2O = (S)-malate + CoA + H(+). It functions in the pathway carbohydrate metabolism; glyoxylate cycle; (S)-malate from isocitrate: step 2/2. The polypeptide is Malate synthase, glyoxysomal (Gossypium hirsutum (Upland cotton)).